The following is a 297-amino-acid chain: ClpXP adapter protein SpxH (297 aa).

Belongs to the SpxH family. As to quaternary structure, interacts with Spx.

It localises to the cytoplasm. Its function is as follows. Adapter protein required for efficient degradation of Spx by ClpXP under non-stress conditions. Interaction with Spx stabilizes Spx and exposes the C-terminus of Spx for recognition and proteolysis by ClpXP. The chain is ClpXP adapter protein SpxH from Bacillus cereus (strain ATCC 10987 / NRS 248).